A 314-amino-acid polypeptide reads, in one-letter code: tRNA dimethylallyltransferase (314 aa).

ATP is bound at residue 13–20; it reads GPTASGKS. 15–20 contacts substrate; that stretch reads TASGKS. Interaction with substrate tRNA regions lie at residues 38-41 and 161-165; these read DSMQ and QRIAR.

This sequence belongs to the IPP transferase family. As to quaternary structure, monomer. Mg(2+) is required as a cofactor.

The enzyme catalyses adenosine(37) in tRNA + dimethylallyl diphosphate = N(6)-dimethylallyladenosine(37) in tRNA + diphosphate. Functionally, catalyzes the transfer of a dimethylallyl group onto the adenine at position 37 in tRNAs that read codons beginning with uridine, leading to the formation of N6-(dimethylallyl)adenosine (i(6)A). The chain is tRNA dimethylallyltransferase from Parvibaculum lavamentivorans (strain DS-1 / DSM 13023 / NCIMB 13966).